The chain runs to 227 residues: ATP synthase F(0) complex subunit a (227 aa).

6 helical membrane-spanning segments follow: residues 9-29 (FASPSYLGIPLIAIAIALPWV), 69-89 (WALLLASLMIFLITINMLGLL), 98-118 (QLSLNMGFAVPLWLATVIIGM), 132-152 (EGTPIPLIPVLIIIETISLFI), 165-185 (LTAGHLLIQLIATAVFVLMPM), and 190-210 (AILTATVLFLLTLLEVAVAMI).

This sequence belongs to the ATPase A chain family. In terms of assembly, component of the ATP synthase complex composed at least of ATP5F1A/subunit alpha, ATP5F1B/subunit beta, ATP5MC1/subunit c (homooctomer), MT-ATP6/subunit a, MT-ATP8/subunit 8, ATP5ME/subunit e, ATP5MF/subunit f, ATP5MG/subunit g, ATP5MK/subunit k, ATP5MJ/subunit j, ATP5F1C/subunit gamma, ATP5F1D/subunit delta, ATP5F1E/subunit epsilon, ATP5PF/subunit F6, ATP5PB/subunit b, ATP5PD/subunit d, ATP5PO/subunit OSCP. ATP synthase complex consists of a soluble F(1) head domain (subunits alpha(3) and beta(3)) - the catalytic core - and a membrane F(0) domain - the membrane proton channel (subunits c, a, 8, e, f, g, k and j). These two domains are linked by a central stalk (subunits gamma, delta, and epsilon) rotating inside the F1 region and a stationary peripheral stalk (subunits F6, b, d, and OSCP). Interacts with DNAJC30; interaction is direct.

The protein resides in the mitochondrion inner membrane. It catalyses the reaction H(+)(in) = H(+)(out). In terms of biological role, subunit a, of the mitochondrial membrane ATP synthase complex (F(1)F(0) ATP synthase or Complex V) that produces ATP from ADP in the presence of a proton gradient across the membrane which is generated by electron transport complexes of the respiratory chain. ATP synthase complex consist of a soluble F(1) head domain - the catalytic core - and a membrane F(1) domain - the membrane proton channel. These two domains are linked by a central stalk rotating inside the F(1) region and a stationary peripheral stalk. During catalysis, ATP synthesis in the catalytic domain of F(1) is coupled via a rotary mechanism of the central stalk subunits to proton translocation. With the subunit c (ATP5MC1), forms the proton-conducting channel in the F(0) domain, that contains two crucial half-channels (inlet and outlet) that facilitate proton movement from the mitochondrial intermembrane space (IMS) into the matrix. Protons are taken up via the inlet half-channel and released through the outlet half-channel, following a Grotthuss mechanism. This chain is ATP synthase F(0) complex subunit a, found in Carassius auratus (Goldfish).